The following is a 476-amino-acid chain: MLLQPESSSKPRNDSPPGFKFHSSCDTCLKAKIKCSQAKPTCARCLQQGRQCVYSPYRKIGRPSTKNLPLDQLQQPKGRTAGGTARRSLSRRVSLASPGIENGSRVGNVRHATNRVLHAQESVLVPSQTWSDQELTGNINRLDYGLEGTNWSALEGLLDASMSTLPQADHELASAVPRLDQVHDLDPNPGQEDLTGYLSPSSLSSRESLATTFPPEAEAGSFGLSSEFPFSAGYSLGTGPVLSESLNAFPVLSSFPSSASSPVTEARGFNLLSAPTDRCTFQCYPVLINILNDMNEFQRKSSGLPLDVLLNLDKRVRKVHETILGCPCCLVSCAAALTLMLITMVNINLLSLFERSCGSTDGGSGSSMSRGELNVAPRIAFGGGNYAGQDRSRNPLPYTTGHLTLGNIHLDETVKLVFSRRLVRLYLERQLGVVQQLSQLLGRVEGDGASIKVTQDLLRDQLRRLEHFVGFITLTD.

Positions 25 to 52 form a DNA-binding region, zn(2)-C6 fungal-type; it reads CDTCLKAKIKCSQAKPTCARCLQQGRQC. The tract at residues 63-92 is disordered; it reads PSTKNLPLDQLQQPKGRTAGGTARRSLSRR. The segment covering 64 to 77 has biased composition (polar residues); sequence STKNLPLDQLQQPK.

The protein localises to the nucleus. Functionally, transcriptional regulator; part of the cla gene cluster that produces clavatol and ortho-quinone methide. The clavatol biosynthesis cluster cla and the terrestric acid cluster tra are both involved in the production of peniphenones and penilactones. The polypeptide is Transcriptional regulator claA (Penicillium crustosum (Blue mold fungus)).